Consider the following 391-residue polypeptide: CBS domain-containing protein CBSX5 (391 aa).

CBS domains are found at residues 16–81 (GKPP…DHDH) and 331–391 (MARK…ENDM).

The protein is CBS domain-containing protein CBSX5 (CBSX5) of Arabidopsis thaliana (Mouse-ear cress).